The following is a 95-amino-acid chain: MSVDAATVRRIAHLARIAVTEDEVPHLQGELNAMLAFVEQLSEVNVEGVEPMTSVTPMQMKKRADVVNDGEIADQVVANAPSTEDHFFLVPKVVE.

This sequence belongs to the GatC family. In terms of assembly, heterotrimer of A, B and C subunits.

The enzyme catalyses L-glutamyl-tRNA(Gln) + L-glutamine + ATP + H2O = L-glutaminyl-tRNA(Gln) + L-glutamate + ADP + phosphate + H(+). It catalyses the reaction L-aspartyl-tRNA(Asn) + L-glutamine + ATP + H2O = L-asparaginyl-tRNA(Asn) + L-glutamate + ADP + phosphate + 2 H(+). Its function is as follows. Allows the formation of correctly charged Asn-tRNA(Asn) or Gln-tRNA(Gln) through the transamidation of misacylated Asp-tRNA(Asn) or Glu-tRNA(Gln) in organisms which lack either or both of asparaginyl-tRNA or glutaminyl-tRNA synthetases. The reaction takes place in the presence of glutamine and ATP through an activated phospho-Asp-tRNA(Asn) or phospho-Glu-tRNA(Gln). This is Aspartyl/glutamyl-tRNA(Asn/Gln) amidotransferase subunit C from Rhodopseudomonas palustris (strain ATCC BAA-98 / CGA009).